We begin with the raw amino-acid sequence, 261 residues long: Vacuolar protein sorting-associated protein 37D (261 aa).

Residues 93-182 (AENCADKLQR…RRRERSAQPA (90 aa)) enclose the VPS37 C-terminal domain. The tract at residues 172-261 (LRRRERSAQP…RPSQPEPPHR (90 aa)) is disordered. The span at 181-195 (PAPTTAAAAAAAATA) shows a compositional bias: low complexity. 2 stretches are compositionally biased toward pro residues: residues 215-224 (GPPPAVPRSL) and 231-261 (PVPP…PPHR).

It belongs to the VPS37 family. As to quaternary structure, component of the ESCRT-I complex (endosomal sorting complex required for transport I) which consists of TSG101, VPS28, a VPS37 protein (VPS37A to -D) and MVB12A or MVB12B in a 1:1:1:1 stoichiometry. Interacts with TSG101 and MVB12A. Component of the ESCRT-I complex (endosomal sorting complex required for transport I) which consists of TSG101, VPS28, a VPS37 protein (VPS37A to -D) and UBAP1 in a 1:1:1:1 stoichiometry.

Its subcellular location is the late endosome membrane. Its function is as follows. Component of the ESCRT-I complex, a regulator of vesicular trafficking process. Required for the sorting of endocytic ubiquitinated cargos into multivesicular bodies. May be involved in cell growth and differentiation. This Mus musculus (Mouse) protein is Vacuolar protein sorting-associated protein 37D.